The following is a 173-amino-acid chain: Large ribosomal subunit protein uL10 (173 aa).

Belongs to the universal ribosomal protein uL10 family. As to quaternary structure, part of the ribosomal stalk of the 50S ribosomal subunit. The N-terminus interacts with L11 and the large rRNA to form the base of the stalk. The C-terminus forms an elongated spine to which L12 dimers bind in a sequential fashion forming a multimeric L10(L12)X complex.

In terms of biological role, forms part of the ribosomal stalk, playing a central role in the interaction of the ribosome with GTP-bound translation factors. This chain is Large ribosomal subunit protein uL10 (rplJ), found in Synechocystis sp. (strain ATCC 27184 / PCC 6803 / Kazusa).